We begin with the raw amino-acid sequence, 250 residues long: uncharacterized protein (250 aa).

6 consecutive 4Fe-4S ferredoxin-type domains span residues 38-67, 69-98, 124-153, 154-183, 191-220, and 220-249; these read KLLYINETKCIRCNLCYKECPVDAIEKAKV, KSAKIIEDKCVKCEICAQTCPVGAIYVIEG, KKYELDENTCIKCGICARFCPTNAIKAVRR, KSIEVNLDLCMGCGACAEVCPKKCIKVERE, RDIEVDKNLCVGCLVCIEECPINAIDQDGD, and DKVKINKDKCILCGRCVDVCPTNAIKMWEK. [4Fe-4S] cluster is bound by residues Cys-47, Cys-50, Cys-53, Cys-57, Cys-78, Cys-81, Cys-84, Cys-88, Cys-133, Cys-136, Cys-139, Cys-143, Cys-163, Cys-166, Cys-169, Cys-173, Cys-200, Cys-203, Cys-206, Cys-210, Cys-229, Cys-232, Cys-235, and Cys-239.

This is an uncharacterized protein from Methanocaldococcus jannaschii (strain ATCC 43067 / DSM 2661 / JAL-1 / JCM 10045 / NBRC 100440) (Methanococcus jannaschii).